Consider the following 429-residue polypeptide: MGKNVVVLGTQWGDEGKGKIVDLLTEHAAAVVRYQGGHNAGHTLVIDGEKTVLHLIPSGVLREGVQCLIGNGVVVAPDALLREITKLEEKGVPVRERLRISPSCPLILSFHVALDQAREKARGELKIGTTGRGIGPAYEDKVARRGLRVGDLLNMPRFEDKLRELVDYHNFMLVGYYKEPAIEFEKTLAECKEYAELLKPLMLDVTAELHDLRRAGKDIMFEGAQGSLLDIDHGTYPYVTSSNTTAGGVATGSGVGPMFLDYILGITKAYTTRVGSGPFPTELFDEVGAHLAKQGHEFGATTGRARRCGWFDAVILRRAIDVNSISGICFTKLDVLDGLETINICVGYKDADGNDVAPTDADSYVGLQPVYEEVPGWTESTVGAKTLEELPANARAYIKRVEALIGAPIDIISTGPDRNETIVLRHPFA.

GTP-binding positions include 13–19 (GDEGKGK) and 41–43 (GHT). D14 serves as the catalytic Proton acceptor. 2 residues coordinate Mg(2+): D14 and G41. IMP contacts are provided by residues 14 to 17 (DEGK), 39 to 42 (NAGH), T130, R144, Q225, T240, and R304. H42 (proton donor) is an active-site residue. 300-306 (ATTGRAR) is a substrate binding site. GTP is bound by residues R306, 332-334 (KLD), and 413-415 (STG).

Belongs to the adenylosuccinate synthetase family. As to quaternary structure, homodimer. Mg(2+) serves as cofactor.

It localises to the cytoplasm. The catalysed reaction is IMP + L-aspartate + GTP = N(6)-(1,2-dicarboxyethyl)-AMP + GDP + phosphate + 2 H(+). Its pathway is purine metabolism; AMP biosynthesis via de novo pathway; AMP from IMP: step 1/2. Plays an important role in the de novo pathway of purine nucleotide biosynthesis. Catalyzes the first committed step in the biosynthesis of AMP from IMP. The protein is Adenylosuccinate synthetase of Pseudomonas fluorescens (strain SBW25).